Consider the following 290-residue polypeptide: Protein MGF 110-9L (290 aa).

The first 19 residues, 1-19 (MKVIVLLLVLAVMQPVIQS), serve as a signal peptide directing secretion. Residues 1–160 (MKVIVLLLVL…QYSRMRMQAA (160 aa)) form an A repeat. A run of 2 helical transmembrane segments spans residues 128-148 (VENIKHTCLCMIATIALIGYV) and 163-183 (LLIFLGLYVLLGILMTNIIMN). Residues 161–290 (TRLLIFLGLY…KRHVINQDDL (130 aa)) form a B repeat.

The protein belongs to the asfivirus MGF 110 family.

It is found in the membrane. This Ornithodoros (relapsing fever ticks) protein is Protein MGF 110-9L.